The sequence spans 311 residues: Acetaldehyde dehydrogenase 2 (311 aa).

NAD(+) is bound at residue 11-14; the sequence is SGNI. The active-site Acyl-thioester intermediate is Cys131. Residues 162-170 and Asn289 each bind NAD(+); that span reads SAGPGTRAN.

It belongs to the acetaldehyde dehydrogenase family.

The catalysed reaction is acetaldehyde + NAD(+) + CoA = acetyl-CoA + NADH + H(+). The protein is Acetaldehyde dehydrogenase 2 (mhpF) of Azotobacter vinelandii (strain DJ / ATCC BAA-1303).